A 235-amino-acid polypeptide reads, in one-letter code: Large ribosomal subunit protein uL1 (235 aa).

It belongs to the universal ribosomal protein uL1 family. Part of the 50S ribosomal subunit.

Functionally, binds directly to 23S rRNA. The L1 stalk is quite mobile in the ribosome, and is involved in E site tRNA release. Protein L1 is also a translational repressor protein, it controls the translation of the L11 operon by binding to its mRNA. This is Large ribosomal subunit protein uL1 from Nitratidesulfovibrio vulgaris (strain DSM 19637 / Miyazaki F) (Desulfovibrio vulgaris).